We begin with the raw amino-acid sequence, 288 residues long: Bifunctional protein FolD (288 aa).

Residues 171-173, S196, and T237 contribute to the NADP(+) site; that span reads GRS.

It belongs to the tetrahydrofolate dehydrogenase/cyclohydrolase family. Homodimer.

It catalyses the reaction (6R)-5,10-methylene-5,6,7,8-tetrahydrofolate + NADP(+) = (6R)-5,10-methenyltetrahydrofolate + NADPH. It carries out the reaction (6R)-5,10-methenyltetrahydrofolate + H2O = (6R)-10-formyltetrahydrofolate + H(+). Its pathway is one-carbon metabolism; tetrahydrofolate interconversion. Catalyzes the oxidation of 5,10-methylenetetrahydrofolate to 5,10-methenyltetrahydrofolate and then the hydrolysis of 5,10-methenyltetrahydrofolate to 10-formyltetrahydrofolate. The sequence is that of Bifunctional protein FolD from Elusimicrobium minutum (strain Pei191).